We begin with the raw amino-acid sequence, 334 residues long: Broad-range acid phosphatase DET1 (334 aa).

Residue histidine 32 is the Tele-phosphohistidine intermediate of the active site. Substrate is bound by residues asparagine 38, 44–45 (NG), and arginine 108. Glutamate 126 functions as the Proton donor/acceptor in the catalytic mechanism. Residues 168 to 171 (LNNT) and 195 to 205 (RVKDEPRIREQ) contribute to the substrate site. Serine 248 is modified (phosphoserine).

It belongs to the phosphoglycerate mutase family.

It is found in the cytoplasm. The protein resides in the nucleus. Its function is as follows. Metal-independent, broad-range acid phosphatase. Involved, either directly or indirectly, in the bidirectional transport of sterols between the endoplasmic reticulum and the plasma membrane. This chain is Broad-range acid phosphatase DET1 (DET1), found in Saccharomyces cerevisiae (strain ATCC 204508 / S288c) (Baker's yeast).